We begin with the raw amino-acid sequence, 695 residues long: Tail-specific protease (695 aa).

A signal peptide spans 1 to 29 (MVMKFKMSKNVICYTWLSVCLSSAIPAFA). The PDZ domain maps to 256-316 (IGTTLQSEDD…RLEDLVEKIK (61 aa)). Residues Ser459, Asp470, and Lys484 each act as charge relay system in the active site.

This sequence belongs to the peptidase S41A family.

It is found in the cell inner membrane. The catalysed reaction is The enzyme shows specific recognition of a C-terminal tripeptide, Xaa-Yaa-Zaa, in which Xaa is preferably Ala or Leu, Yaa is preferably Ala or Tyr, and Zaa is preferably Ala, but then cleaves at a variable distance from the C-terminus. A typical cleavage is -Ala-Ala-|-Arg-Ala-Ala-Lys-Glu-Asn-Tyr-Ala-Leu-Ala-Ala.. Involved in the cleavage of a C-terminal peptide of 11 residues from the precursor form of penicillin-binding protein 3 (PBP3). May be involved in protection of the bacterium from thermal and osmotic stresses. This Haemophilus influenzae (strain ATCC 51907 / DSM 11121 / KW20 / Rd) protein is Tail-specific protease (prc).